The following is a 361-amino-acid chain: Protein RecA (361 aa).

Residue 77–84 (GPESSGKT) participates in ATP binding.

It belongs to the RecA family.

It is found in the cytoplasm. Functionally, can catalyze the hydrolysis of ATP in the presence of single-stranded DNA, the ATP-dependent uptake of single-stranded DNA by duplex DNA, and the ATP-dependent hybridization of homologous single-stranded DNAs. It interacts with LexA causing its activation and leading to its autocatalytic cleavage. This is Protein RecA from Brucella abortus (strain S19).